The chain runs to 500 residues: Probable malate:quinone oxidoreductase (500 aa).

This sequence belongs to the MQO family. FAD is required as a cofactor.

The enzyme catalyses (S)-malate + a quinone = a quinol + oxaloacetate. It functions in the pathway carbohydrate metabolism; tricarboxylic acid cycle; oxaloacetate from (S)-malate (quinone route): step 1/1. The sequence is that of Probable malate:quinone oxidoreductase from Bacillus anthracis (strain A0248).